Here is a 232-residue protein sequence, read N- to C-terminus: Octanoyltransferase (232 aa).

The 176-residue stretch at 44 to 219 (EHTADEVWVV…QLARQFGLVL (176 aa)) folds into the BPL/LPL catalytic domain. Substrate contacts are provided by residues 83-90 (RGGQVTYH), 150-152 (ALG), and 163-165 (GLS). The Acyl-thioester intermediate role is filled by Cys-181.

Belongs to the LipB family.

The protein localises to the cytoplasm. The enzyme catalyses octanoyl-[ACP] + L-lysyl-[protein] = N(6)-octanoyl-L-lysyl-[protein] + holo-[ACP] + H(+). The protein operates within protein modification; protein lipoylation via endogenous pathway; protein N(6)-(lipoyl)lysine from octanoyl-[acyl-carrier-protein]: step 1/2. Catalyzes the transfer of endogenously produced octanoic acid from octanoyl-acyl-carrier-protein onto the lipoyl domains of lipoate-dependent enzymes. Lipoyl-ACP can also act as a substrate although octanoyl-ACP is likely to be the physiological substrate. In Xanthomonas euvesicatoria pv. vesicatoria (strain 85-10) (Xanthomonas campestris pv. vesicatoria), this protein is Octanoyltransferase.